Consider the following 120-residue polypeptide: Cell division protein FtsL (120 aa).

At 1–36 (MSNLAVKYKQQAQEEVQIQTPPQQMVQPKAKAKITR) the chain is on the cytoplasmic side. A helical membrane pass occupies residues 37–57 (IEKLLYVAFIGFLLYACVAFI). The Extracellular segment spans residues 58–120 (GNKAGLYQVN…INANNVKGLK (63 aa)).

The protein belongs to the FtsL family.

The protein localises to the cell membrane. Essential cell division protein. This chain is Cell division protein FtsL, found in Bacillus anthracis.